Here is a 143-residue protein sequence, read N- to C-terminus: Crossover junction endodeoxyribonuclease Hjc (143 aa).

A Mg(2+)-binding site is contributed by Glu12. The active site involves Ser32. Mg(2+)-binding residues include Asp42 and Glu55.

This sequence belongs to the Holliday junction resolvase Hjc family. In terms of assembly, homodimer. Interacts with PCNA subunit PCNA1. Mg(2+) serves as cofactor.

It catalyses the reaction Endonucleolytic cleavage at a junction such as a reciprocal single-stranded crossover between two homologous DNA duplexes (Holliday junction).. With respect to regulation, autoinhibits at very high concentrations, possibly because of extreme junction distortion. Inhibition (and activity at low concentrations of enzyme) is stimulated by dsDNA and Sso7d. Activity stimulated by PCNA subunit PCNA1. Functionally, a structure-specific endonuclease that resolves Holliday junction (HJ) intermediates during genetic recombination; may have some degree of sequence preference in a mobile junction. Cleaves 4-way DNA junctions introducing paired nicks in opposing strands, leaving a 5'-terminal phosphate and a 3'-terminal hydroxyl group that are subsequently ligated to produce recombinant products. Can cleave all 4 strands 3 bases 3' of the junction center. Cleaves both mobile and immobile junctions. Modifies the structure of the 4-way DNA junction, a model Holliday junction structure. The protein forms multiple complexes with 4-way DNA, suggesting more than 1 homodimer can bind to each junction. The chain is Crossover junction endodeoxyribonuclease Hjc from Saccharolobus solfataricus (strain ATCC 35092 / DSM 1617 / JCM 11322 / P2) (Sulfolobus solfataricus).